The following is a 277-amino-acid chain: Glutamate racemase (277 aa).

Substrate is bound by residues 13-14 (DS) and 45-46 (YG). The active-site Proton donor/acceptor is Cys-77. 78–79 (NT) serves as a coordination point for substrate. Cys-192 serves as the catalytic Proton donor/acceptor. 193 to 194 (TH) contributes to the substrate binding site.

It belongs to the aspartate/glutamate racemases family.

It catalyses the reaction L-glutamate = D-glutamate. It participates in cell wall biogenesis; peptidoglycan biosynthesis. Its function is as follows. Provides the (R)-glutamate required for cell wall biosynthesis. This Rhizobium meliloti (strain 1021) (Ensifer meliloti) protein is Glutamate racemase.